The following is a 651-amino-acid chain: Beta-glucuronidase (651 aa).

Positions M1–G22 are cleaved as a signal peptide. N-linked (GlcNAc...) asparagine glycosylation is found at N173, N190, N272, and N420. E451 (proton donor) is an active-site residue. N631 carries N-linked (GlcNAc...) asparagine glycosylation.

The protein belongs to the glycosyl hydrolase 2 family. As to quaternary structure, homotetramer.

Its subcellular location is the lysosome. It catalyses the reaction a beta-D-glucuronoside + H2O = D-glucuronate + an alcohol. Its activity is regulated as follows. Inhibited by L-aspartic acid. In terms of biological role, plays an important role in the degradation of dermatan and keratan sulfates. This chain is Beta-glucuronidase (GUSB), found in Pongo abelii (Sumatran orangutan).